A 98-amino-acid polypeptide reads, in one-letter code: Large ribosomal subunit protein uL23 (98 aa).

The protein belongs to the universal ribosomal protein uL23 family. As to quaternary structure, part of the 50S ribosomal subunit. Contacts protein L29, and trigger factor when it is bound to the ribosome.

In terms of biological role, one of the early assembly proteins it binds 23S rRNA. One of the proteins that surrounds the polypeptide exit tunnel on the outside of the ribosome. Forms the main docking site for trigger factor binding to the ribosome. This is Large ribosomal subunit protein uL23 from Cereibacter sphaeroides (strain ATCC 17029 / ATH 2.4.9) (Rhodobacter sphaeroides).